Consider the following 1679-residue polypeptide: Maestro heat-like repeat-containing protein family member 2A (1679 aa).

15 HEAT repeats span residues 68–91 (ATTD…ISTQ), 92–128 (RKMN…QMRD), 190–229 (MPYM…TVQF), 293–313 (EQVY…GHWP), 314–350 (LFPS…ELHV), 380–417 (SYPK…ADDP), 422–459 (KTIY…SGFQ), 571–610 (PAPQ…SIAP), 614–654 (DMWE…SLKK), 737–774 (KTVL…ETVK), 848–887 (SALT…MKPF), 991–1028 (GQFG…LHVS), 1219–1261 (DPLM…SHGP), 1387–1425 (KLLR…GAPR), and 1632–1669 (MDLV…CNQH).

The chain is Maestro heat-like repeat-containing protein family member 2A (Mroh2a) from Mus musculus (Mouse).